The sequence spans 167 residues: Secretion monitor (167 aa).

Residues 1–36 (MIGILNRWRQFGRRYFWPHLLLGMVAASFGLPQASA) form the signal peptide.

The protein belongs to the SecM family.

Its subcellular location is the cytoplasm. The protein localises to the cytosol. The protein resides in the periplasm. In terms of biological role, regulates secA expression by translational coupling of the secM secA operon. Translational pausing at a specific Pro residue 5 residues before the end of the protein may allow disruption of a mRNA repressor helix that normally suppresses secA translation initiation. The sequence is that of Secretion monitor from Erwinia tasmaniensis (strain DSM 17950 / CFBP 7177 / CIP 109463 / NCPPB 4357 / Et1/99).